The sequence spans 122 residues: Large ribosomal subunit protein bL12 (122 aa).

This sequence belongs to the bacterial ribosomal protein bL12 family. As to quaternary structure, homodimer. Part of the ribosomal stalk of the 50S ribosomal subunit. Forms a multimeric L10(L12)X complex, where L10 forms an elongated spine to which 2 to 4 L12 dimers bind in a sequential fashion. Binds GTP-bound translation factors.

Its function is as follows. Forms part of the ribosomal stalk which helps the ribosome interact with GTP-bound translation factors. Is thus essential for accurate translation. The chain is Large ribosomal subunit protein bL12 from Vibrio parahaemolyticus serotype O3:K6 (strain RIMD 2210633).